We begin with the raw amino-acid sequence, 704 residues long: DNA ligase (704 aa).

NAD(+) is bound by residues 44–48 (DYEYD), 93–94 (SI), and E125. K127 functions as the N6-AMP-lysine intermediate in the catalytic mechanism. Residues R148, E184, K300, and K324 each coordinate NAD(+). Residues C418, C421, C436, and C442 each coordinate Zn(2+). Positions 625-704 (IISSNISGKI…DEWEHLINEK (80 aa)) constitute a BRCT domain.

It belongs to the NAD-dependent DNA ligase family. LigA subfamily. Mg(2+) is required as a cofactor. Mn(2+) serves as cofactor.

It carries out the reaction NAD(+) + (deoxyribonucleotide)n-3'-hydroxyl + 5'-phospho-(deoxyribonucleotide)m = (deoxyribonucleotide)n+m + AMP + beta-nicotinamide D-nucleotide.. Its function is as follows. DNA ligase that catalyzes the formation of phosphodiester linkages between 5'-phosphoryl and 3'-hydroxyl groups in double-stranded DNA using NAD as a coenzyme and as the energy source for the reaction. It is essential for DNA replication and repair of damaged DNA. The protein is DNA ligase of Pelobacter propionicus (strain DSM 2379 / NBRC 103807 / OttBd1).